The chain runs to 268 residues: Ribosomal RNA small subunit methyltransferase A (268 aa).

6 residues coordinate S-adenosyl-L-methionine: N16, L18, G43, E64, D89, and N110.

Belongs to the class I-like SAM-binding methyltransferase superfamily. rRNA adenine N(6)-methyltransferase family. RsmA subfamily.

The protein resides in the cytoplasm. The catalysed reaction is adenosine(1518)/adenosine(1519) in 16S rRNA + 4 S-adenosyl-L-methionine = N(6)-dimethyladenosine(1518)/N(6)-dimethyladenosine(1519) in 16S rRNA + 4 S-adenosyl-L-homocysteine + 4 H(+). Functionally, specifically dimethylates two adjacent adenosines (A1518 and A1519) in the loop of a conserved hairpin near the 3'-end of 16S rRNA in the 30S particle. May play a critical role in biogenesis of 30S subunits. In Pseudomonas savastanoi pv. phaseolicola (strain 1448A / Race 6) (Pseudomonas syringae pv. phaseolicola (strain 1448A / Race 6)), this protein is Ribosomal RNA small subunit methyltransferase A.